Here is a 218-residue protein sequence, read N- to C-terminus: Large ribosomal subunit protein uL3 (218 aa).

Disordered stretches follow at residues 128–167 and 199–218; these read FSRGPMSHGSKNHRLPGSIGAGTTPGRVYPGKRMAGRMGG and SLLNIRPAKRVGAPTQQGGK.

It belongs to the universal ribosomal protein uL3 family. Part of the 50S ribosomal subunit. Forms a cluster with proteins L14 and L19.

Functionally, one of the primary rRNA binding proteins, it binds directly near the 3'-end of the 23S rRNA, where it nucleates assembly of the 50S subunit. The polypeptide is Large ribosomal subunit protein uL3 (Prochlorococcus marinus (strain NATL2A)).